Here is a 501-residue protein sequence, read N- to C-terminus: Putative BTB/POZ domain-containing protein L107 (501 aa).

One can recognise a BTB domain in the interval 16 to 87 (TDLELTLVDS…FYITDIERSQ (72 aa)).

This sequence belongs to the mimivirus BTB/WD family.

In Acanthamoeba polyphaga mimivirus (APMV), this protein is Putative BTB/POZ domain-containing protein L107.